Consider the following 234-residue polypeptide: Leucyl/phenylalanyl-tRNA--protein transferase (234 aa).

The protein belongs to the L/F-transferase family.

The protein localises to the cytoplasm. It carries out the reaction N-terminal L-lysyl-[protein] + L-leucyl-tRNA(Leu) = N-terminal L-leucyl-L-lysyl-[protein] + tRNA(Leu) + H(+). It catalyses the reaction N-terminal L-arginyl-[protein] + L-leucyl-tRNA(Leu) = N-terminal L-leucyl-L-arginyl-[protein] + tRNA(Leu) + H(+). The enzyme catalyses L-phenylalanyl-tRNA(Phe) + an N-terminal L-alpha-aminoacyl-[protein] = an N-terminal L-phenylalanyl-L-alpha-aminoacyl-[protein] + tRNA(Phe). In terms of biological role, functions in the N-end rule pathway of protein degradation where it conjugates Leu, Phe and, less efficiently, Met from aminoacyl-tRNAs to the N-termini of proteins containing an N-terminal arginine or lysine. The polypeptide is Leucyl/phenylalanyl-tRNA--protein transferase (Escherichia coli O45:K1 (strain S88 / ExPEC)).